Consider the following 407-residue polypeptide: Nicotinate phosphoribosyltransferase (407 aa).

His224 carries the phosphohistidine; by autocatalysis modification.

Belongs to the NAPRTase family. Transiently phosphorylated on a His residue during the reaction cycle. Phosphorylation strongly increases the affinity for substrates and increases the rate of nicotinate D-ribonucleotide production. Dephosphorylation regenerates the low-affinity form of the enzyme, leading to product release.

The catalysed reaction is nicotinate + 5-phospho-alpha-D-ribose 1-diphosphate + ATP + H2O = nicotinate beta-D-ribonucleotide + ADP + phosphate + diphosphate. The protein operates within cofactor biosynthesis; NAD(+) biosynthesis; nicotinate D-ribonucleotide from nicotinate: step 1/1. Functionally, catalyzes the synthesis of beta-nicotinate D-ribonucleotide from nicotinate and 5-phospho-D-ribose 1-phosphate at the expense of ATP. This is Nicotinate phosphoribosyltransferase from Pseudomonas savastanoi pv. phaseolicola (strain 1448A / Race 6) (Pseudomonas syringae pv. phaseolicola (strain 1448A / Race 6)).